The primary structure comprises 274 residues: Rhamnulose-1-phosphate aldolase (274 aa).

Residue glutamate 117 is part of the active site. Residues histidine 141, histidine 143, and histidine 212 each coordinate Zn(2+).

It belongs to the aldolase class II family. RhaD subfamily. As to quaternary structure, homotetramer. Zn(2+) serves as cofactor.

Its subcellular location is the cytoplasm. It catalyses the reaction L-rhamnulose 1-phosphate = (S)-lactaldehyde + dihydroxyacetone phosphate. The protein operates within carbohydrate degradation; L-rhamnose degradation; glycerone phosphate from L-rhamnose: step 3/3. Catalyzes the reversible cleavage of L-rhamnulose-1-phosphate to dihydroxyacetone phosphate (DHAP) and L-lactaldehyde. This is Rhamnulose-1-phosphate aldolase from Yersinia pestis.